We begin with the raw amino-acid sequence, 312 residues long: Olfactory receptor 6C75 (312 aa).

Residues 1–23 (MRNSTAVTDFILLGLTSDPQWQV) are Extracellular-facing. The N-linked (GlcNAc...) asparagine glycan is linked to N3. Residues 24 to 44 (VLFIFLLVTYMLSVTGNLIII) traverse the membrane as a helical segment. Residues 45–63 (TLTLSDPHLQTPMYFFLRN) are Cytoplasmic-facing. Residues 64–84 (FSFLEISFTSVCIPRFLVTVV) form a helical membrane-spanning segment. The Extracellular portion of the chain corresponds to 85-95 (TGNRTISYNGC). A disulfide bond links C95 and C177. The chain crosses the membrane as a helical span at residues 96-116 (VAQLFFFIFLGVTEFYLLAAM). The Cytoplasmic segment spans residues 117 to 140 (SYDRCMAICKPLHYTIIMSTRVCT). The helical transmembrane segment at 141–161 (LLVFSSWLAGFLIIFPPVMLL) threads the bilayer. Residues 162–194 (LQLDFCASNVIDHFICDSSPMLQLSCTNTHFLE) are Extracellular-facing. A helical membrane pass occupies residues 195 to 215 (LMAFFLAVVTLMVTLTLVILS). At 216 to 237 (YTNIIRTILKIPSMSQRKKAFS) the chain is on the cytoplasmic side. The helical transmembrane segment at 238–258 (TCSSHMIVVSISYSSCIFMYI) threads the bilayer. Over 259-269 (KTSARERVTLS) the chain is Extracellular. A helical membrane pass occupies residues 270–290 (KGVAVLNTSVAPLLNPFIYTL). Over 291–312 (RNKQVKQAFKSMVQKMIFSLNK) the chain is Cytoplasmic.

This sequence belongs to the G-protein coupled receptor 1 family.

Its subcellular location is the cell membrane. Functionally, odorant receptor. This chain is Olfactory receptor 6C75 (OR6C75), found in Homo sapiens (Human).